A 73-amino-acid polypeptide reads, in one-letter code: Large ribosomal subunit protein uL24 (73 aa).

Over residues 53-65 (NPKGGFIKKEKPM) the composition is skewed to basic and acidic residues. A disordered region spans residues 53–73 (NPKGGFIKKEKPMHISNVKKA).

Belongs to the universal ribosomal protein uL24 family. As to quaternary structure, part of the 50S ribosomal subunit.

Functionally, one of two assembly initiator proteins, it binds directly to the 5'-end of the 23S rRNA, where it nucleates assembly of the 50S subunit. Its function is as follows. One of the proteins that surrounds the polypeptide exit tunnel on the outside of the subunit. This chain is Large ribosomal subunit protein uL24, found in Helicobacter pylori (strain J99 / ATCC 700824) (Campylobacter pylori J99).